A 296-amino-acid polypeptide reads, in one-letter code: Probable AP endonuclease (296 aa).

Cysteine 16 and cysteine 20 form a disulfide bridge. Positions 78, 115, 142, 182, 218, 231, 233, and 271 each coordinate Zn(2+).

This sequence belongs to the AP endonuclease 2 family. Zn(2+) is required as a cofactor.

It is found in the host nucleus. The protein resides in the host cytoplasm. Its subcellular location is the virion. Endonuclease of the viral base excision repair system that catalyzes DNA cleavage reaction at the apurinic or apyrimidinic sites (AP sites). Cleaves phosphodiester bonds on the 5' side of AP sites. In addition to endonuclease activity, the AP endonuclease has a proofreading 3'-5' exonuclease activity that is considerably more efficient in the elimination of a mismatch than in that of a correctly paired base. Displays 3'-phosphatase and 3'-repair diesterase activities. The single nucleotide gaps generated by the AP endonuclease are filled by the viral repair DNA polymerase X and the DNA ligase. The polypeptide is Probable AP endonuclease (Ornithodoros (relapsing fever ticks)).